The primary structure comprises 76 residues: MAEQPTFEQNLSQLETIVNQLEQGDVPLEQALDQFQKGVALSKQLQATLEGAEKTLTKMMNENGDEVPFEQADANE.

The protein belongs to the XseB family. In terms of assembly, heterooligomer composed of large and small subunits.

It localises to the cytoplasm. It catalyses the reaction Exonucleolytic cleavage in either 5'- to 3'- or 3'- to 5'-direction to yield nucleoside 5'-phosphates.. Functionally, bidirectionally degrades single-stranded DNA into large acid-insoluble oligonucleotides, which are then degraded further into small acid-soluble oligonucleotides. This Lactiplantibacillus plantarum (strain ATCC BAA-793 / NCIMB 8826 / WCFS1) (Lactobacillus plantarum) protein is Exodeoxyribonuclease 7 small subunit.